The primary structure comprises 160 residues: Sperm protein associated with the nucleus on the X chromosome N2 (160 aa).

Disordered regions lie at residues 1–48 and 64–160; these read MEKP…TSEY and SNQL…GEED. Over residues 10–35 the composition is skewed to basic and acidic residues; sequence GEKRKSPCDSNNRNDEMQETPNRDLA. Over residues 64 to 79 the composition is skewed to polar residues; sequence SNQLENDQSQENSVNP. Over residues 81–97 the composition is skewed to acidic residues; the sequence is QEEEDEGSSQEDEDLDS. Positions 136–148 are enriched in basic and acidic residues; that stretch reads SSERSSQEEKDPD.

This sequence belongs to the SPAN-X family.

In Pongo pygmaeus (Bornean orangutan), this protein is Sperm protein associated with the nucleus on the X chromosome N2 (SPANXN2).